The following is a 244-amino-acid chain: Phosphoadenosine 5'-phosphosulfate reductase (244 aa).

The Nucleophile; cysteine thiosulfonate intermediate role is filled by cysteine 239.

Belongs to the PAPS reductase family. CysH subfamily.

Its subcellular location is the cytoplasm. The enzyme catalyses [thioredoxin]-disulfide + sulfite + adenosine 3',5'-bisphosphate + 2 H(+) = [thioredoxin]-dithiol + 3'-phosphoadenylyl sulfate. Its pathway is sulfur metabolism; hydrogen sulfide biosynthesis; sulfite from sulfate: step 3/3. Catalyzes the formation of sulfite from phosphoadenosine 5'-phosphosulfate (PAPS) using thioredoxin as an electron donor. This chain is Phosphoadenosine 5'-phosphosulfate reductase, found in Salmonella newport (strain SL254).